Reading from the N-terminus, the 91-residue chain is Peptide Ctry2146 (91 aa).

The signal sequence occupies residues 1 to 23 (MKTQTLLVTFLVVLLMVATQTEA). Leucine 33 carries the post-translational modification Leucine amide. Positions 37–91 (GLLDGLLGKRGLLFGKRGPLFGKRALTNQDFLDFAYDPSLSAADMDALEMLFEDY) are excised as a propeptide.

It belongs to the non-disulfide-bridged peptide (NDBP) superfamily. Short antimicrobial peptide (group 4) family. In terms of tissue distribution, expressed by the venom gland.

Its subcellular location is the secreted. The protein localises to the target cell membrane. Its function is as follows. Antimicrobial peptide. This Chaerilus tryznai (Scorpion) protein is Peptide Ctry2146.